A 246-amino-acid chain; its full sequence is Probable transcriptional regulatory protein HS_0508 (246 aa).

Belongs to the TACO1 family.

The protein resides in the cytoplasm. This is Probable transcriptional regulatory protein HS_0508 from Histophilus somni (strain 129Pt) (Haemophilus somnus).